Reading from the N-terminus, the 323-residue chain is Acetyl-coenzyme A carboxylase carboxyl transferase subunit alpha (323 aa).

A CoA carboxyltransferase C-terminal domain is found at 39 to 293; it reads RLAGKSQQLT…KRSLAESLRQ (255 aa).

Belongs to the AccA family. As to quaternary structure, acetyl-CoA carboxylase is a heterohexamer composed of biotin carboxyl carrier protein (AccB), biotin carboxylase (AccC) and two subunits each of ACCase subunit alpha (AccA) and ACCase subunit beta (AccD).

The protein localises to the cytoplasm. The enzyme catalyses N(6)-carboxybiotinyl-L-lysyl-[protein] + acetyl-CoA = N(6)-biotinyl-L-lysyl-[protein] + malonyl-CoA. It participates in lipid metabolism; malonyl-CoA biosynthesis; malonyl-CoA from acetyl-CoA: step 1/1. Functionally, component of the acetyl coenzyme A carboxylase (ACC) complex. First, biotin carboxylase catalyzes the carboxylation of biotin on its carrier protein (BCCP) and then the CO(2) group is transferred by the carboxyltransferase to acetyl-CoA to form malonyl-CoA. The polypeptide is Acetyl-coenzyme A carboxylase carboxyl transferase subunit alpha (Cupriavidus metallidurans (strain ATCC 43123 / DSM 2839 / NBRC 102507 / CH34) (Ralstonia metallidurans)).